The primary structure comprises 336 residues: Holliday junction branch migration complex subunit RuvB (336 aa).

The interval 4–184 (ADRLVSADSS…FGIVQRLEFY (181 aa)) is large ATPase domain (RuvB-L). Residues Ile-23, Arg-24, Gly-65, Lys-68, Thr-69, Thr-70, 131 to 133 (EDY), Arg-174, Tyr-184, and Arg-221 each bind ATP. Thr-69 provides a ligand contact to Mg(2+). The tract at residues 185–255 (QIPDLQHIVS…IAAQALDMLN (71 aa)) is small ATPAse domain (RuvB-S). The head domain (RuvB-H) stretch occupies residues 258-336 (AEGFDYMDRK…HFGITPPEMP (79 aa)). 3 residues coordinate DNA: Arg-294, Arg-313, and Arg-318.

This sequence belongs to the RuvB family. Homohexamer. Forms an RuvA(8)-RuvB(12)-Holliday junction (HJ) complex. HJ DNA is sandwiched between 2 RuvA tetramers; dsDNA enters through RuvA and exits via RuvB. An RuvB hexamer assembles on each DNA strand where it exits the tetramer. Each RuvB hexamer is contacted by two RuvA subunits (via domain III) on 2 adjacent RuvB subunits; this complex drives branch migration. In the full resolvosome a probable DNA-RuvA(4)-RuvB(12)-RuvC(2) complex forms which resolves the HJ.

It localises to the cytoplasm. It carries out the reaction ATP + H2O = ADP + phosphate + H(+). Its function is as follows. The RuvA-RuvB-RuvC complex processes Holliday junction (HJ) DNA during genetic recombination and DNA repair, while the RuvA-RuvB complex plays an important role in the rescue of blocked DNA replication forks via replication fork reversal (RFR). RuvA specifically binds to HJ cruciform DNA, conferring on it an open structure. The RuvB hexamer acts as an ATP-dependent pump, pulling dsDNA into and through the RuvAB complex. RuvB forms 2 homohexamers on either side of HJ DNA bound by 1 or 2 RuvA tetramers; 4 subunits per hexamer contact DNA at a time. Coordinated motions by a converter formed by DNA-disengaged RuvB subunits stimulates ATP hydrolysis and nucleotide exchange. Immobilization of the converter enables RuvB to convert the ATP-contained energy into a lever motion, pulling 2 nucleotides of DNA out of the RuvA tetramer per ATP hydrolyzed, thus driving DNA branch migration. The RuvB motors rotate together with the DNA substrate, which together with the progressing nucleotide cycle form the mechanistic basis for DNA recombination by continuous HJ branch migration. Branch migration allows RuvC to scan DNA until it finds its consensus sequence, where it cleaves and resolves cruciform DNA. The sequence is that of Holliday junction branch migration complex subunit RuvB from Klebsiella pneumoniae (strain 342).